The sequence spans 199 residues: Fe/S biogenesis protein NfuA (199 aa).

Cys151 and Cys154 together coordinate [4Fe-4S] cluster.

Belongs to the NfuA family. As to quaternary structure, homodimer. Requires [4Fe-4S] cluster as cofactor.

Functionally, involved in iron-sulfur cluster biogenesis. Binds a 4Fe-4S cluster, can transfer this cluster to apoproteins, and thereby intervenes in the maturation of Fe/S proteins. Could also act as a scaffold/chaperone for damaged Fe/S proteins. In Stenotrophomonas maltophilia (strain K279a), this protein is Fe/S biogenesis protein NfuA.